The primary structure comprises 96 residues: U6 snRNA-associated Sm-like protein LSm8 (96 aa).

The 76-residue stretch at 1–76 (MTSALENYIN…VAVIGEIDEE (76 aa)) folds into the Sm domain. Thr2 bears the N-acetylthreonine mark.

It belongs to the snRNP Sm proteins family. As to quaternary structure, component of the precatalytic spliceosome (spliceosome B complex). Component of the U4/U6-U5 tri-snRNP complex, a building block of the precatalytic spliceosome (spliceosome B complex). The U4/U6-U5 tri-snRNP complex is composed of the U4, U6 and U5 snRNAs and at least PRPF3, PRPF4, PRPF6, PRPF8, PRPF31, SNRNP200, TXNL4A, SNRNP40, SNRPB, SNRPD1, SNRPD2, SNRPD3, SNRPE, SNRPF, SNRPG, DDX23, CD2BP2, PPIH, SNU13, EFTUD2, SART1 and USP39, plus LSM2, LSM3, LSM4, LSM5, LSM6, LSM7 and LSM8. LSM2, LSM3, LSM4, LSM5, LSM6, LSM7 and LSM8 form a heptameric, ring-shaped subcomplex (the LSM2-8 complex) that is part of the U4/U6-U5 tri-snRNP complex and the precatalytic spliceosome.

Its subcellular location is the nucleus. Its function is as follows. Plays a role in pre-mRNA splicing as component of the U4/U6-U5 tri-snRNP complex that is involved in spliceosome assembly, and as component of the precatalytic spliceosome (spliceosome B complex). The heptameric LSM2-8 complex binds specifically to the 3'-terminal U-tract of U6 snRNA. In Bos taurus (Bovine), this protein is U6 snRNA-associated Sm-like protein LSm8 (LSM8).